A 349-amino-acid chain; its full sequence is Protein AMBP (349 aa).

Residues 1–19 (MLGLGTLFLLLAACPASRA) form the signal peptide. N-linked (GlcNAc...) asparagine glycosylation is present at N35. 3-hydroxy-L-kynurenine-binding residues include C52 and K110. An intrachain disulfide couples C90 to C187. N114 carries N-linked (GlcNAc...) asparagine glycosylation. 3-hydroxy-L-kynurenine-binding residues include K136 and K148. S214 carries an O-linked (Xyl...) (chondroitin sulfate) serine glycan. 6 disulfides stabilise this stretch: C230–C280, C239–C263, C255–C276, C286–C336, C295–C319, and C311–C332. BPTI/Kunitz inhibitor domains lie at 230–280 (CQLS…LQTC) and 286–336 (CSLP…KEYC).

The protein in the N-terminal section; belongs to the calycin superfamily. Lipocalin family. As to quaternary structure, monomer. Homodimer. In plasma, it occurs as a monomer or dimer and in covalently-linked complexes with immunoglobulin A (IgA), ALB/albumin and F2/prothrombin. Chromophore-bound alpha-1-microglobulin interacts with the constant region of immunoglobulin A. Chromophore-bound alpha-1-microglobulin interacts with ALB with molar ratio 2:1 and 1:1; this interaction does not prevent fatty acid binding to ALB. Interacts with F2/prothrombin (via N-terminus) with molar ratio 2:1 and 1:1; this interaction does not prevent the activation of prothrombin to thrombin. Interacts with NDUFAB1, a subunit of mitochondrial complex I. Interacts with FN1. In terms of assembly, I-alpha-I plasma protease inhibitors are assembled from one or two heavy chains (HC) and one light chain, bikunin. Inter-alpha-inhibitor (I-alpha-I) is composed of ITIH1/HC1, ITIH2/HC2 and bikunin, and pre-alpha-inhibitor (P-alpha-I) of ITIH3/HC3 and bikunin. Interacts with TNFAIP6 (via Link domain). Monomer. Also occurs as a complex with tryptase in mast cells. Post-translationally, the precursor is proteolytically processed into separately functioning proteins. 3-hydroxykynurenine, an oxidized tryptophan metabolite that is common in biological fluids, reacts with Cys-53, Lys-111, Lys-137, and Lys-149 to form heterogeneous polycyclic chromophores including hydroxanthommatin. The reaction by alpha-1-microglobulin is autocatalytic; the human protein forms chromophore even when expressed in insect and bacterial cells. The chromophore can react with accessible cysteines forming non-reducible thioether cross-links with other molecules of alpha-1-microglobulin or with other proteins such as Ig alpha-1 chain C region 'Cys-352'. In terms of processing, heavy chains are interlinked with bikunin via a chondroitin 4-sulfate bridge to the C-terminal aspartate. Post-translationally, proteolytically cleaved by PRSS3 at Kunitz domain 2. Expressed by the liver and secreted in plasma.

The protein localises to the secreted. The protein resides in the endoplasmic reticulum. Its subcellular location is the cytoplasm. It is found in the cytosol. It localises to the cell membrane. The protein localises to the nucleus membrane. The protein resides in the mitochondrion inner membrane. Its subcellular location is the extracellular space. It is found in the extracellular matrix. Functionally, antioxidant and tissue repair protein with reductase, heme-binding and radical-scavenging activities. Removes and protects against harmful oxidants and repairs macromolecules in intravascular and extravascular spaces and in intracellular compartments. Intravascularly, plays a regulatory role in red cell homeostasis by preventing heme- and reactive oxygen species-induced cell damage. Binds and degrades free heme to protect fetal and adult red blood cells from hemolysis. Reduces extracellular methemoglobin, a Fe3+ (ferric) form of hemoglobin that cannot bind oxygen, back to the Fe2+ (ferrous) form deoxyhemoglobin, which has oxygen-carrying potential. Upon acute inflammation, inhibits oxidation of low-density lipoprotein particles by MPO and limits vascular damage. Extravascularly, protects from oxidation products formed on extracellular matrix structures and cell membranes. Catalyzes the reduction of carbonyl groups on oxidized collagen fibers and preserves cellular and extracellular matrix ultrastructures. Importantly, counteracts the oxidative damage at blood-placenta interface, preventing leakage of free fetal hemoglobin into the maternal circulation. Intracellularly, has a role in maintaining mitochondrial redox homeostasis. Bound to complex I of the respiratory chain of mitochondria, may scavenge free radicals and preserve mitochondrial ATP synthesis. Protects renal tubule epithelial cells from heme-induced oxidative damage to mitochondria. Reduces cytochrome c from Fe3+ (ferric) to the Fe2+ (ferrous) state through formation of superoxide anion radicals in the presence of ascorbate or NADH/NADPH electron donor cofactors, ascorbate being the preferred cofactor. Has a chaperone role in facilitating the correct folding of bikunin in the endoplasmic reticulum compartment. Its function is as follows. Kunitz-type serine protease inhibitor and structural component of extracellular matrix with a role in extracellular space remodeling and cell adhesion. Among others, has antiprotease activity toward kallikrein, a protease involved in airway inflammation; inhibits GZMK/granzyme, a granule-stored serine protease involved in NK and T cell cytotoxic responses; and inhibits PLG/plasmin, a protease required for activation of matrix metalloproteinases. As part of I-alpha-I complex, provides for the heavy chains to be transferred from I-alpha-I complex to hyaluronan in the presence of TNFAIP6, in a dynamic process that releases free bikunin and remodels extracellular matrix proteoglycan structures. Free bikunin, but not its heavy chain-bound form, acts as a potent protease inhibitor in airway secretions. Part of hyaluronan-rich extracellular matrix that surrounds oocyte during cumulus oophorus expansion, an indispensable process for proper ovulation. Also inhibits calcium oxalate crystallization. Kunitz-type serine protease inhibitor. Has high catalytic efficiency for F10/blood coagulation factor Xa and may act as an anticoagulant by inhibiting prothrombin activation. Inhibits trypsin and mast cell CMA1/chymase and tryptase proteases. The sequence is that of Protein AMBP (AMBP) from Mesocricetus auratus (Golden hamster).